The following is a 611-amino-acid chain: uncharacterized protein (611 aa).

Residues 51 to 351 (LYGFIRLKIY…DYHKQGSRNL (301 aa)) form the SAC domain.

The protein to yeast RSD1 and S.pombe SpBC19F5.03.

This is an uncharacterized protein from Schizosaccharomyces pombe (strain 972 / ATCC 24843) (Fission yeast).